The following is a 368-amino-acid chain: Putative potassium channel KAT5 (368 aa).

The next 3 membrane-spanning stretches (helical) occupy residues 33–53 (WWHMFLIMLVLYSAWASPFEL), 97–117 (LLNLLRLWRLRCASKLFARVE), and 132–152 (LLCVTLFALHFAACIYLWMVF). Residues 180–199 (CAVYWSITTLATVGYGDLHA) constitute an intramembrane region (pore-forming). Residues 206 to 226 (LFSIAFMLFNMGLTSYIIGNI) form a helical membrane-spanning segment. An a nucleoside 3',5'-cyclic phosphate-binding site is contributed by 225 to 344 (NITNLVVRET…CIVFSNFILV (120 aa)).

This sequence belongs to the potassium channel family. Plant (TC 1.A.1.4) subfamily.

The protein resides in the membrane. Functionally, putative inward-rectifying potassium channel. This is Putative potassium channel KAT5 from Oryza sativa subsp. japonica (Rice).